The sequence spans 670 residues: Microtubule-associated protein ssm4 (670 aa).

Residues 23 to 65 (GSTDFESGIWLGVELLNGKGKNDGSVKGKRYFSCEKGKGIFVR) form the CAP-Gly domain. Coiled-coil stretches lie at residues 209-254 (KSEL…KNSI) and 404-582 (VKTR…KLAD). Ser460 is subject to Phosphoserine. Thr606 is subject to Phosphothreonine.

It localises to the cytoplasm. The protein resides in the cytoskeleton. The protein localises to the spindle. In terms of biological role, binds to nuclear microtubules with the effect of either modifying their structure or function. This then promotes meiotic nuclear division. The chain is Microtubule-associated protein ssm4 (ssm4) from Schizosaccharomyces pombe (strain 972 / ATCC 24843) (Fission yeast).